A 42-amino-acid chain; its full sequence is MNLFDLQSMETPKEEAMGDVETGSRASLLLCGDSSLSITTCN.

A propeptide spanning residues 1–21 (MNLFDLQSMETPKEEAMGDVE) is cleaved from the precursor. The tract at residues 1–21 (MNLFDLQSMETPKEEAMGDVE) is disordered. Cross-links (lanthionine (Ser-Cys)) lie at residues 24–31 (SRASLLLC) and 34–41 (SSLSITTC). Serine 27 and serine 37 each carry 2,3-didehydroalanine (Ser).

Belongs to the lanthionine-containing morphogen family. In terms of processing, maturation involves the enzymatic conversion of Ser into dehydrated AA and the formation of thioether bonds with cysteine, probably by RamC. This is followed by membrane translocation and cleavage of the modified precursor. The RamS precursor protein (detected by an anti-propeptide antibody and by a C-terminal His-tag) is detected from at least 16 hours post-germination; its apparent molecular weight decreases starting from about 34 hours, when its probable modifying enzyme ramC is transcribed. Surfactin, a B.subtilis cyclic lipopeptide antibiotic which prevents aerial hyphae formation in S.coelicolor, decreases localization of RamS precursor protein to the cell membrane, suggesting that processing only occurs at the cell membrane.

The protein localises to the cell membrane. It is found in the secreted. It localises to the spore wall. In terms of biological role, stably accumulated precursor of SapB. Lanthionine-containing peptide devoid of antibiotic properties. A surface active peptide involved in the efficient formation of aerial mycelium when cells are grown in rich media. Has an overlapping function with the surface-active chaplin proteins; chaplins are essential on minimal medium while on rich medium both chaplins and SapB are required for efficient aerial hyphae formation. Required under conditions of high osmolarity where it may change the physical properties of the chaplin layer to allow hyphae to grow into air. Suggested to self-assemble at air-water interfaces, thus providing a film of surfactant through which nascent aerial hyphae can emerge; the aerial hyphae differentiate further into spores. Application to bald mutants (bld, unable to make aerial hyphae) restores hyphae growth. Application to chaplin negative mutants as well as ramC-ramS-ramA-ramB and ramR deletions also restores aerial hyphae growth and sporulation. Reduces surface tension of water from 72 to 30 mJ/m(2). This chain is Lanthionine-containing peptide SapB precursor RamS (ramS), found in Streptomyces coelicolor (strain ATCC BAA-471 / A3(2) / M145).